A 137-amino-acid polypeptide reads, in one-letter code: Small ribosomal subunit protein bS6 (137 aa).

The interval 96–137 (ITEASPMAKAKDERDTRRSSEERAPRAEAAEEVEESAENTAE) is disordered. Over residues 104-124 (KAKDERDTRRSSEERAPRAEA) the composition is skewed to basic and acidic residues. Over residues 125–137 (AEEVEESAENTAE) the composition is skewed to acidic residues.

It belongs to the bacterial ribosomal protein bS6 family.

In terms of biological role, binds together with bS18 to 16S ribosomal RNA. This chain is Small ribosomal subunit protein bS6, found in Shewanella halifaxensis (strain HAW-EB4).